A 379-amino-acid polypeptide reads, in one-letter code: Cytochrome b (379 aa).

A run of 4 helical transmembrane segments spans residues 33–53 (FGSL…FLAM), 77–98 (WMIR…FIHV), 113–133 (WNVG…GYVL), and 178–198 (FFAL…IHLL). The heme b site is built by His83 and His97. Residues His182 and His196 each coordinate heme b. Residue His201 participates in a ubiquinone binding. The next 4 membrane-spanning stretches (helical) occupy residues 226-246 (TKDF…ALFY), 288-308 (LGGV…PFLQ), 320-340 (LSQF…WIGG), and 347-367 (FISI…FIMP).

It belongs to the cytochrome b family. The cytochrome bc1 complex contains 11 subunits: 3 respiratory subunits (MT-CYB, CYC1 and UQCRFS1), 2 core proteins (UQCRC1 and UQCRC2) and 6 low-molecular weight proteins (UQCRH/QCR6, UQCRB/QCR7, UQCRQ/QCR8, UQCR10/QCR9, UQCR11/QCR10 and a cleavage product of UQCRFS1). This cytochrome bc1 complex then forms a dimer. Heme b serves as cofactor.

It localises to the mitochondrion inner membrane. Its function is as follows. Component of the ubiquinol-cytochrome c reductase complex (complex III or cytochrome b-c1 complex) that is part of the mitochondrial respiratory chain. The b-c1 complex mediates electron transfer from ubiquinol to cytochrome c. Contributes to the generation of a proton gradient across the mitochondrial membrane that is then used for ATP synthesis. The polypeptide is Cytochrome b (MT-CYB) (Lepilemur septentrionalis (Northern sportive lemur)).